Reading from the N-terminus, the 193-residue chain is uncharacterized protein (193 aa).

An N-terminal signal peptide occupies residues 1–26 (MRNVFVGALCMCGMSFVFSDSVRSAA).

This is an uncharacterized protein from Treponema pallidum (strain Nichols).